The chain runs to 1298 residues: Phosphoribosylformylglycinamidine synthase (1298 aa).

A disordered region spans residues 303 to 327; the sequence is FPGAATGSGGEIRDEGATGRGAKPK. ATP is bound by residues 305–316, 384–386, and alanine 676; these read GAATGSGGEIRD and TGY. The Mg(2+) site is built by aspartate 677, glutamate 716, asparagine 720, and aspartate 884. Serine 886 provides a ligand contact to ATP. The 254-residue stretch at 1045-1298 folds into the Glutamine amidotransferase type-1 domain; sequence VAVLREQGVN…MFRNARAWVN (254 aa). Catalysis depends on cysteine 1138, which acts as the Nucleophile. Residues histidine 1263 and glutamate 1265 contribute to the active site.

The protein in the N-terminal section; belongs to the FGAMS family. Monomer.

The protein localises to the cytoplasm. The catalysed reaction is N(2)-formyl-N(1)-(5-phospho-beta-D-ribosyl)glycinamide + L-glutamine + ATP + H2O = 2-formamido-N(1)-(5-O-phospho-beta-D-ribosyl)acetamidine + L-glutamate + ADP + phosphate + H(+). It participates in purine metabolism; IMP biosynthesis via de novo pathway; 5-amino-1-(5-phospho-D-ribosyl)imidazole from N(2)-formyl-N(1)-(5-phospho-D-ribosyl)glycinamide: step 1/2. In terms of biological role, phosphoribosylformylglycinamidine synthase involved in the purines biosynthetic pathway. Catalyzes the ATP-dependent conversion of formylglycinamide ribonucleotide (FGAR) and glutamine to yield formylglycinamidine ribonucleotide (FGAM) and glutamate. The protein is Phosphoribosylformylglycinamidine synthase of Pseudomonas savastanoi pv. phaseolicola (strain 1448A / Race 6) (Pseudomonas syringae pv. phaseolicola (strain 1448A / Race 6)).